Reading from the N-terminus, the 809-residue chain is MSQDQEEDYSKLPLESRIVHKVWKVRLSAYEECSKSFSLSADGSDNCFELWNNQSELWKSVLTDSNVAAQEAGTAAFVAYCRFSDPSHLLKAREISVLSISEKCLTSPRAGTRENALEALMLLVEADSAAPVIESIIPSLSARSPKVIASNVAAIASLVEQFGAKVIPSKMIIPHISNLFGHADKNVRKEASRLTVNIYRWTGDPLKDLLFKDLRPVQTKELESLFAELPTEPPKQTRFLKSQQPTSEPNVETQVEEQPALENEESEPEPSDDQFDLVEEVDVLPNVDPNLETLMASSKWKDRKEALDKLLPVLSQPKIKDNDFFNLVAILTKSVSKDANIMVVINAAHCIQAMAKGLRSNFSKYASTSINALLERSKEKKANVIESLSSAMDAVLATSSLDDLAELIASFAGNKNPQIKSSCFSLFSRSFSNMTSLPSKFTVDTCAKACVPGVSDTFEPVRSAAAEALGVLMKLVGERAINQYLSPLDDIRKSKIRSFYETATVKAKAPTKKSKVKPSKQEESKVVVPSNAKAVKKSVVPSSPVVPSPRKATNKSLSMDVSKGNAFENGPLLPRPTTRPVSRGLSRGTSSSLQQKVKASTPLNSGALNETVQNLKNMELDDPAPQPAKHSRVDRYEHPKVLEDNDSTISSLESLKRENEELREQLKVEHEENISMQKQLSELKGELNTLRSARKASPIGDRKPAFMRRANTDFLELSTSPSFQRSVREFEPTRPKLYSSIDVNQRSPLASAKTNGNFTFHAELPRSPFSSRANNINPDWTKAIDLAAKLKQKITEMKQTDQRHQGLIH.

HEAT repeat units lie at residues 127 to 164 (DSAA…QFGA) and 167 to 204 (IPSK…WTGD). Disordered stretches follow at residues 233–274 (PPKQ…SDDQ), 507–608 (AKAP…SGAL), and 619–638 (ELDD…RYEH). Positions 239-253 (FLKSQQPTSEPNVET) are enriched in polar residues. Residues 262–274 (ENEESEPEPSDDQ) are compositionally biased toward acidic residues. Over residues 509-518 (APTKKSKVKP) the composition is skewed to basic residues. Low complexity-rich tracts occupy residues 526–551 (VVVP…SPRK) and 582–595 (SRGL…SLQQ). A phosphoserine mark is found at Ser543 and Ser548. A compositionally biased stretch (polar residues) spans 597–608 (VKASTPLNSGAL). The stretch at 637–697 (EHPKVLEDND…NTLRSARKAS (61 aa)) forms a coiled coil. Phosphoserine occurs at positions 697 and 720.

The protein belongs to the TOG/XMAP215 family. As to quaternary structure, interacts with alp14.

The protein resides in the cytoplasm. The protein localises to the cytoskeleton. It localises to the microtubule organizing center. It is found in the spindle pole body. Its subcellular location is the chromosome. The protein resides in the centromere. The protein localises to the kinetochore. In terms of biological role, required for bipolar spindle formation and proper chromosome segregation. Has a role in connecting the kinetochores and the plus end of pole to chromosome microtubules. Also required for the activation of the spindle checkpoint pathway. The chain is Spindle pole body component alp14 (alp14) from Schizosaccharomyces pombe (strain 972 / ATCC 24843) (Fission yeast).